We begin with the raw amino-acid sequence, 86 residues long: MLTSTLLAAATTPLEWSPTVGIIMVIANVIAITFGRQTIKYPSAEPALPSAKFFGGFGAPALLATTAFGHILGVGLVLGLHNLGRI.

Residues 1–8 (MLTSTLLA) constitute a propeptide that is removed on maturation. 2 consecutive transmembrane segments (helical) span residues 14–34 (LEWS…AITF) and 60–80 (PALL…VLGL).

This sequence belongs to the PsaG/PsaK family. As to quaternary structure, the cyanobacterial PSI reaction center is composed of one copy each of PsaA,B,C,D,E,F,I,J,K,L,M and X, and forms dimeric and tetrameric complexes.

It is found in the cellular thylakoid membrane. This chain is Photosystem I reaction center subunit PsaK 1 (psaK1), found in Nostoc sp. (strain PCC 7120 / SAG 25.82 / UTEX 2576).